Consider the following 320-residue polypeptide: tRNA(Ile)-lysidine synthase (320 aa).

Serine 33–serine 38 is a binding site for ATP.

Belongs to the tRNA(Ile)-lysidine synthase family.

The protein localises to the cytoplasm. The enzyme catalyses cytidine(34) in tRNA(Ile2) + L-lysine + ATP = lysidine(34) in tRNA(Ile2) + AMP + diphosphate + H(+). Its function is as follows. Ligates lysine onto the cytidine present at position 34 of the AUA codon-specific tRNA(Ile) that contains the anticodon CAU, in an ATP-dependent manner. Cytidine is converted to lysidine, thus changing the amino acid specificity of the tRNA from methionine to isoleucine. The polypeptide is tRNA(Ile)-lysidine synthase (Mycolicibacterium paratuberculosis (strain ATCC BAA-968 / K-10) (Mycobacterium paratuberculosis)).